The chain runs to 307 residues: Pseudouridine-5'-phosphate glycosidase (307 aa).

Glu-28 serves as the catalytic Proton donor. Substrate-binding residues include Lys-89 and Val-109. Asp-141 is a binding site for Mn(2+). Residue Ser-143 to Asp-145 coordinates substrate. The active-site Nucleophile is Lys-162.

It belongs to the pseudouridine-5'-phosphate glycosidase family. Homotrimer. Requires Mn(2+) as cofactor.

It catalyses the reaction D-ribose 5-phosphate + uracil = psi-UMP + H2O. Catalyzes the reversible cleavage of pseudouridine 5'-phosphate (PsiMP) to ribose 5-phosphate and uracil. Functions biologically in the cleavage direction, as part of a pseudouridine degradation pathway. The protein is Pseudouridine-5'-phosphate glycosidase of Staphylococcus aureus (strain MW2).